The following is a 308-amino-acid chain: Cell division protein FtsX (308 aa).

Topologically, residues 1–24 (MISRFFRHLFEALKSLKRNGWMTV) are cytoplasmic. A helical membrane pass occupies residues 25–45 (AAVSSVMITLTLVAIFASVIF). At 46–178 (NTAKLATDIE…NTERLFKLAS (133 aa)) the chain is on the extracellular side. The helical transmembrane segment at 179 to 199 (FIRVWGLGIAALLIFIAVFLI) threads the bilayer. The Cytoplasmic segment spans residues 200–236 (SNTIRITIISRSREIQIMRLVGAKNSYIRGPFLLEGA). A helical transmembrane segment spans residues 237-257 (FIGLLGAIAPSVLVFIVYQIV). Over 258-276 (YQSVNKSLVGQNLSMISPD) the chain is Extracellular. Residues 277–297 (LFSPLMIALLFVIGVFIGSLG) traverse the membrane as a helical segment. Residues 298-308 (SGISMRRFLKI) lie on the Cytoplasmic side of the membrane.

Belongs to the ABC-4 integral membrane protein family. FtsX subfamily. As to quaternary structure, homodimer. Interacts with FtsE; forms a membrane-associated complex. Interacts (via large extracellular loop) with PcsB (via N-terminal coiled-coil domain). This interaction directs PcsB to equatorial and septal sites of dividing cells.

It is found in the cell membrane. Part of the ABC transporter FtsEX involved in asymmetric cellular division facilitating the initiation of sporulation. Required in maintaining normal growth and cellular morphology. In Streptococcus pneumoniae serotype 2 (strain D39 / NCTC 7466), this protein is Cell division protein FtsX.